The sequence spans 313 residues: D-alanine--D-alanine ligase (313 aa).

One can recognise an ATP-grasp domain in the interval 104–304; sequence KQALVPHGIP…YSDLVEAIIA (201 aa). An ATP-binding site is contributed by 130–187; sequence PLPRPYVLKPVNEGSSVGVAIVTAEGNYGSPISAASKGPWQEFDQLLAEPFIRGRELT. Mg(2+) is bound by residues D255, E271, and N273.

The protein belongs to the D-alanine--D-alanine ligase family. The cofactor is Mg(2+). Mn(2+) serves as cofactor.

It is found in the cytoplasm. The enzyme catalyses 2 D-alanine + ATP = D-alanyl-D-alanine + ADP + phosphate + H(+). Its pathway is cell wall biogenesis; peptidoglycan biosynthesis. Functionally, cell wall formation. This is D-alanine--D-alanine ligase from Novosphingobium aromaticivorans (strain ATCC 700278 / DSM 12444 / CCUG 56034 / CIP 105152 / NBRC 16084 / F199).